A 331-amino-acid chain; its full sequence is Beta-ketoacyl-[acyl-carrier-protein] synthase III (331 aa).

Residues C115 and H255 contribute to the active site. Positions 256–260 are ACP-binding; the sequence is QANFR. N285 is a catalytic residue.

The protein belongs to the thiolase-like superfamily. FabH family. As to quaternary structure, homodimer.

Its subcellular location is the cytoplasm. It carries out the reaction malonyl-[ACP] + acetyl-CoA + H(+) = 3-oxobutanoyl-[ACP] + CO2 + CoA. It functions in the pathway lipid metabolism; fatty acid biosynthesis. Functionally, catalyzes the condensation reaction of fatty acid synthesis by the addition to an acyl acceptor of two carbons from malonyl-ACP. Catalyzes the first condensation reaction which initiates fatty acid synthesis and may therefore play a role in governing the total rate of fatty acid production. Possesses both acetoacetyl-ACP synthase and acetyl transacylase activities. Its substrate specificity determines the biosynthesis of branched-chain and/or straight-chain of fatty acids. The sequence is that of Beta-ketoacyl-[acyl-carrier-protein] synthase III from Helicobacter pylori (strain ATCC 700392 / 26695) (Campylobacter pylori).